A 121-amino-acid polypeptide reads, in one-letter code: Large ribosomal subunit protein uL18 (121 aa).

Belongs to the universal ribosomal protein uL18 family. Part of the 50S ribosomal subunit; part of the 5S rRNA/L5/L18/L25 subcomplex. Contacts the 5S and 23S rRNAs.

Functionally, this is one of the proteins that bind and probably mediate the attachment of the 5S RNA into the large ribosomal subunit, where it forms part of the central protuberance. This chain is Large ribosomal subunit protein uL18, found in Ehrlichia chaffeensis (strain ATCC CRL-10679 / Arkansas).